Reading from the N-terminus, the 987-residue chain is Probable outer membrane protein PmpG (987 aa).

The N-terminal stretch at 1-25 (MMQTPFHKFFLLAMLSYSLLQGGHA) is a signal peptide. The Autotransporter domain occupies 707–987 (GRAYCRGIWI…GLSIGSKIRF (281 aa)).

The protein belongs to the PMP outer membrane protein family.

It localises to the secreted. The protein resides in the cell wall. The protein localises to the cell outer membrane. The polypeptide is Probable outer membrane protein PmpG (pmpG) (Chlamydia muridarum (strain MoPn / Nigg)).